We begin with the raw amino-acid sequence, 396 residues long: S-adenosylmethionine synthase (396 aa).

Residue H16 participates in ATP binding. D18 serves as a coordination point for Mg(2+). E44 contributes to the K(+) binding site. L-methionine is bound by residues E57 and Q100. The segment at 100-110 is flexible loop; that stretch reads QSVDIAQGVDR. Residues 165–167, D240, 246–247, A263, and K267 each bind ATP; these read DAK and RK. D240 contacts L-methionine. K271 is a binding site for L-methionine.

Belongs to the AdoMet synthase family. In terms of assembly, homotetramer; dimer of dimers. Mg(2+) is required as a cofactor. Requires K(+) as cofactor.

It localises to the cytoplasm. The catalysed reaction is L-methionine + ATP + H2O = S-adenosyl-L-methionine + phosphate + diphosphate. Its pathway is amino-acid biosynthesis; S-adenosyl-L-methionine biosynthesis; S-adenosyl-L-methionine from L-methionine: step 1/1. In terms of biological role, catalyzes the formation of S-adenosylmethionine (AdoMet) from methionine and ATP. The overall synthetic reaction is composed of two sequential steps, AdoMet formation and the subsequent tripolyphosphate hydrolysis which occurs prior to release of AdoMet from the enzyme. This Pseudomonas syringae pv. syringae (strain B728a) protein is S-adenosylmethionine synthase.